The primary structure comprises 286 residues: Mitochondrial dicarboxylate carrier (286 aa).

Solcar repeat units lie at residues 7–87 (SRWY…MRDY), 100–187 (SKVL…AKQL), and 196–279 (DNIF…LRKH). The next 3 membrane-spanning stretches (helical) occupy residues 9–29 (WYFG…LDLL), 62–81 (GLSA…FAIY), and 102–122 (VLLG…ADLV). Lys-158 carries the N6-acetyllysine modification. The next 3 membrane-spanning stretches (helical) occupy residues 162–181 (GATM…LSCY), 202–222 (FLSS…LDVL), and 254–274 (GLVP…MFLE).

Belongs to the mitochondrial carrier (TC 2.A.29) family. As to expression, expressed most strongly in liver, then kidney, and at lower levels in heart and brain.

The protein localises to the mitochondrion inner membrane. It catalyses the reaction (S)-malate(in) + phosphate(out) = (S)-malate(out) + phosphate(in). It carries out the reaction malonate(out) + (S)-malate(in) = malonate(in) + (S)-malate(out). The catalysed reaction is (S)-malate(in) + succinate(out) = (S)-malate(out) + succinate(in). The enzyme catalyses (S)-malate(in) + sulfate(out) = (S)-malate(out) + sulfate(in). It catalyses the reaction malonate(out) + phosphate(in) = malonate(in) + phosphate(out). It carries out the reaction succinate(out) + phosphate(in) = succinate(in) + phosphate(out). The catalysed reaction is sulfate(out) + phosphate(in) = sulfate(in) + phosphate(out). The enzyme catalyses malonate(out) + succinate(in) = malonate(in) + succinate(out). Catalyzes the electroneutral exchange or flux of physiologically important metabolites such as dicarboxylates (malonate, malate, succinate), inorganic sulfur-containing anions, and phosphate, across mitochondrial inner membrane. Plays an important role in gluconeogenesis, fatty acid metabolism, urea synthesis, and sulfur metabolism, particularly in liver, by supplying the substrates for the different metabolic processes. Regulates fatty acid release from adipocytes, and contributes to systemic insulin sensitivity. In Rattus norvegicus (Rat), this protein is Mitochondrial dicarboxylate carrier.